Consider the following 553-residue polypeptide: Pumilio domain-containing protein 5 (553 aa).

Pumilio repeat units follow at residues 146 to 184, 185 to 223, 224 to 260, 261 to 296, 297 to 335, 347 to 384, 386 to 421, and 432 to 472; these read DVVS…VLFD, KLTE…RLVR, KMCD…KLVE, KISS…SFFV, KFLC…HCFN, SVAR…TIIE, CLLR…EMMD, and ETNR…KMVA. The RNA-binding stretch occupies residues 499 to 514; the sequence is FSSGKKIIESLQKLNV.

Detected in differentiating oocytes with highest levels observed in developing ooctyes in the distal portion of the proximal gonad.

Its subcellular location is the cytoplasm. The protein localises to the P-body. In terms of biological role, RNA-binding protein that binds to the consensus sequence 5'-CUCUGUAUCUUGU-3' in mRNA 3'-UTRs and modulates mRNA expression and stability. Functions redundantly with puf-6 and puf-7 in oocyte formation and organization, early embryonic cell divisions, and repression of expression of glp-1 and other maternal mRNAs in late oogenesis. This chain is Pumilio domain-containing protein 5, found in Caenorhabditis elegans.